The chain runs to 185 residues: MTAYLRPALSLALLMTLVTGALYPLAVTGIAQVAFPNQANGSLVRDAQGQVRGSALIAQDFQGDGWFHSRPSAGAYATVASGASNLSPSNPALAERVKGDAATLYQAQQGPVPQALLTTSGSGLDPHLPPEALAYQIPRVAAARQLPVERLQALLEQATLHPLIGPPVVNVLALNQALEKLAIVR.

A helical transmembrane segment spans residues 11-31; that stretch reads LALLMTLVTGALYPLAVTGIA.

It belongs to the KdpC family. As to quaternary structure, the system is composed of three essential subunits: KdpA, KdpB and KdpC.

It localises to the cell inner membrane. In terms of biological role, part of the high-affinity ATP-driven potassium transport (or Kdp) system, which catalyzes the hydrolysis of ATP coupled with the electrogenic transport of potassium into the cytoplasm. This subunit acts as a catalytic chaperone that increases the ATP-binding affinity of the ATP-hydrolyzing subunit KdpB by the formation of a transient KdpB/KdpC/ATP ternary complex. The protein is Potassium-transporting ATPase KdpC subunit of Pseudomonas putida (strain ATCC 47054 / DSM 6125 / CFBP 8728 / NCIMB 11950 / KT2440).